The primary structure comprises 293 residues: Probable metal transport system membrane protein CT_417 (293 aa).

7 helical membrane-spanning segments follow: residues 18–38 (SLLA…YIVV), 41–61 (IVSI…IALW), 68–88 (LPIS…ICIG), 101–121 (IISM…SKLP), 135–155 (ILWV…FIVA), 187–207 (LLLI…GVIL), and 242–262 (FLGI…IAIL).

Belongs to the ABC-3 integral membrane protein family.

It localises to the cell inner membrane. In terms of biological role, part of an ATP-driven transport system CT_415/CT_416/CT_417 for a metal. The protein is Probable metal transport system membrane protein CT_417 of Chlamydia trachomatis serovar D (strain ATCC VR-885 / DSM 19411 / UW-3/Cx).